The following is a 150-amino-acid chain: Protein Turandot X (150 aa).

An N-terminal signal peptide occupies residues 1–22; the sequence is MGLHIGSLLICVFLGILPFATA. Residues 127 to 150 are disordered; it reads REEGQSNHANSPTTLPSRIQKMTK. The span at 132–150 shows a compositional bias: polar residues; the sequence is SNHANSPTTLPSRIQKMTK.

Belongs to the Turandot family.

Its subcellular location is the secreted. In terms of biological role, a humoral factor that may play a role in stress tolerance. The polypeptide is Protein Turandot X (Drosophila simulans (Fruit fly)).